Consider the following 348-residue polypeptide: MARPMGKLPSNTRKCAQCAMAEALLEIAGQTINQKDLGRSGRMTRTDNDTWDLASSVGATATMIATARALASRAENPLINDPFAEPLVRAVGIDLFTRLASGELRLEDIGDHATGGRWMIDNIAIRTKFYDDFFGDATTAGIRQVVILAAGLDTRAYRLPWPPGTVVYEIDQPAVIKFKTRALANLNAEPNAERHAVAVDLRNDWPTALKNAGFDPARPTAFSAEGLLSYLPPQGQDRLLDAITALSAPDSRLATQSPLVLDLAEEDEKKMRMKSAAEAWRERGFDLDLTELIYFDQRNDVADYLAGSGWQVTTSTGKELFAAQGLPPFEDDHITRFADRRYISAVLK.

S-adenosyl-L-methionine-binding positions include Asp171 and 200–201; that span reads DL.

Belongs to the UPF0677 family.

Its function is as follows. Exhibits S-adenosyl-L-methionine-dependent methyltransferase activity. The polypeptide is Putative S-adenosyl-L-methionine-dependent methyltransferase Mb3432 (Mycobacterium bovis (strain ATCC BAA-935 / AF2122/97)).